Consider the following 320-residue polypeptide: tRNA uridine(34) hydroxylase (320 aa).

In terms of domain architecture, Rhodanese spans 123-217; sequence EDENTVILDA…YGKDPETKGQ (95 aa). Residue Cys-177 is the Cysteine persulfide intermediate of the active site.

Belongs to the TrhO family.

The enzyme catalyses uridine(34) in tRNA + AH2 + O2 = 5-hydroxyuridine(34) in tRNA + A + H2O. Functionally, catalyzes oxygen-dependent 5-hydroxyuridine (ho5U) modification at position 34 in tRNAs. This Staphylococcus epidermidis (strain ATCC 12228 / FDA PCI 1200) protein is tRNA uridine(34) hydroxylase.